The sequence spans 457 residues: Multidrug resistance protein MdtK (457 aa).

Helical transmembrane passes span 11-31 (LLAL…MGVV), 46-66 (AVAV…GLLL), 93-113 (WLAF…DHII), 127-147 (AVGF…FQVL), 160-180 (GMVI…IFIY), 188-208 (LGGV…FLMM), 243-263 (LPVA…ALLV), 278-300 (LNFS…IRVG), 316-336 (YTSI…TVVF), 350-370 (VVVM…SDAI), 387-407 (IFFI…YLLG), and 418-438 (PSGF…LMAL).

Belongs to the multi antimicrobial extrusion (MATE) (TC 2.A.66.1) family. MdtK subfamily.

It localises to the cell inner membrane. Functionally, multidrug efflux pump that functions probably as a Na(+)/drug antiporter. This Yersinia enterocolitica serotype O:8 / biotype 1B (strain NCTC 13174 / 8081) protein is Multidrug resistance protein MdtK.